A 368-amino-acid polypeptide reads, in one-letter code: uncharacterized protein (368 aa).

The protein belongs to the YCR102c/YLR460c/YNL134c family.

This is an uncharacterized protein from Saccharomyces cerevisiae (strain ATCC 204508 / S288c) (Baker's yeast).